The chain runs to 102 residues: Urease subunit beta (102 aa).

Belongs to the urease beta subunit family. In terms of assembly, heterotrimer of UreA (gamma), UreB (beta) and UreC (alpha) subunits. Three heterotrimers associate to form the active enzyme.

The protein resides in the cytoplasm. It carries out the reaction urea + 2 H2O + H(+) = hydrogencarbonate + 2 NH4(+). It participates in nitrogen metabolism; urea degradation; CO(2) and NH(3) from urea (urease route): step 1/1. The chain is Urease subunit beta from Methylibium petroleiphilum (strain ATCC BAA-1232 / LMG 22953 / PM1).